The sequence spans 374 residues: Glycerophosphodiester phosphodiesterase GDPD2 (374 aa).

A GP-PDE domain is found at 38–326; the sequence is FSVIGHRGIG…DFVEEIIEST (289 aa). Residues 330–349 form a disordered region; the sequence is MIRPPPSSSPLPSPSKDDDV. The segment covering 332–342 has biased composition (pro residues); sequence RPPPSSSPLPS.

The protein belongs to the glycerophosphoryl diester phosphodiesterase family. Expressed in roots, shoots, flowers and siliques.

The enzyme catalyses a sn-glycero-3-phosphodiester + H2O = an alcohol + sn-glycerol 3-phosphate + H(+). The protein is Glycerophosphodiester phosphodiesterase GDPD2 of Arabidopsis thaliana (Mouse-ear cress).